The sequence spans 498 residues: Interferon regulatory factor 5 (498 aa).

Residue threonine 10 is modified to Phosphothreonine. Positions 12 to 18 (PRRVRLK) match the Nuclear localization signal motif. The IRF tryptophan pentad repeat DNA-binding region spans 14–122 (RVRLKPWLVA…QPYKIYEVCS (109 aa)). A disordered region spans residues 121 to 207 (CSNGPAPTDS…SPLAPPPGNP (87 aa)). Residues 150–160 (LQRMLPSLSLT) carry the Nuclear export signal motif. A Phosphoserine; by TBK1 modification is found at serine 158. Residues 168-206 (TLQPPTLRPPTLQPPTLQPPVVLGPPAPDPSPLAPPPGN) show a composition bias toward pro residues. Phosphoserine; by TBK1 is present on serine 293. The residue at position 301 (serine 301) is a Phosphoserine. Glycyl lysine isopeptide (Lys-Gly) (interchain with G-Cter in ubiquitin) cross-links involve residues lysine 411 and lysine 412. 4 positions are modified to phosphoserine: serine 431, serine 435, serine 437, and serine 440. Serine 446 is modified (phosphoserine; by IKKB). Positions 478-498 (PPGAGLGVGQGPWPMHPAGMQ) are disordered.

The protein belongs to the IRF family. Homodimer, when phosphorylated. Interacts with TASL (via pLxIS motif); interaction takes place downstream of TLR7, TLR8 or TLR9, leading to its activation. Interacts with MYD88 and TRAF6. Post-translationally, phosphorylation of serine and threonine residues by IKBKB in a C-terminal autoinhibitory region, stimulates dimerization, transport into the nucleus, assembly with the coactivator CBP/EP300 and initiation of transcription. 'Lys-63'-linked polyubiquitination by TRAF6 is required for activation.

Its subcellular location is the cytoplasm. It localises to the nucleus. With respect to regulation, maintained as a monomer in an autoinhibited state. Phosphorylation and activation follow the following steps: innate adapter protein TASL recruits IRF5, thereby licensing IRF5 for phosphorylation by IKBKB. Phosphorylated IRF5 dissociates from the adapter proteins, dimerizes, and then enters the nucleus to induce IFNs. Its activity is regulated as follows. (Microbial infection) Activated upon coronavirus SARS-CoV-2 infection. Functionally, transcription factor that plays a critical role in innate immunity by activating expression of type I interferon (IFN) IFNA and INFB and inflammatory cytokines downstream of endolysosomal toll-like receptors TLR7, TLR8 and TLR9. Regulates the transcription of type I IFN genes (IFN-alpha and IFN-beta) and IFN-stimulated genes (ISG) by binding to an interferon-stimulated response element (ISRE) in their promoters. Can efficiently activate both the IFN-beta (IFNB) and the IFN-alpha (IFNA) genes and mediate their induction downstream of the TLR-activated, MyD88-dependent pathway. Key transcription factor regulating the IFN response during SARS-CoV-2 infection. The chain is Interferon regulatory factor 5 from Homo sapiens (Human).